Reading from the N-terminus, the 417-residue chain is Sulfate adenylyltransferase (417 aa).

Positions 1-10 (MTSITANQKP) are enriched in polar residues. Positions 1–20 (MTSITANQKPSKLVPPHGSP) are disordered.

It belongs to the sulfate adenylyltransferase family.

The catalysed reaction is sulfate + ATP + H(+) = adenosine 5'-phosphosulfate + diphosphate. It functions in the pathway sulfur metabolism; hydrogen sulfide biosynthesis; sulfite from sulfate: step 1/3. The protein is Sulfate adenylyltransferase of Psychrobacter arcticus (strain DSM 17307 / VKM B-2377 / 273-4).